We begin with the raw amino-acid sequence, 190 residues long: UPF0301 protein PSPPH_0476 (190 aa).

It belongs to the UPF0301 (AlgH) family.

In Pseudomonas savastanoi pv. phaseolicola (strain 1448A / Race 6) (Pseudomonas syringae pv. phaseolicola (strain 1448A / Race 6)), this protein is UPF0301 protein PSPPH_0476.